The following is a 388-amino-acid chain: tRNA(Ile)-lysidine synthase (388 aa).

Position 51–56 (51–56 (SGGRDS)) interacts with ATP.

Belongs to the tRNA(Ile)-lysidine synthase family.

The protein resides in the cytoplasm. It carries out the reaction cytidine(34) in tRNA(Ile2) + L-lysine + ATP = lysidine(34) in tRNA(Ile2) + AMP + diphosphate + H(+). In terms of biological role, ligates lysine onto the cytidine present at position 34 of the AUA codon-specific tRNA(Ile) that contains the anticodon CAU, in an ATP-dependent manner. Cytidine is converted to lysidine, thus changing the amino acid specificity of the tRNA from methionine to isoleucine. In Bifidobacterium longum (strain DJO10A), this protein is tRNA(Ile)-lysidine synthase.